A 230-amino-acid polypeptide reads, in one-letter code: Somatolactin (230 aa).

Residues 1-23 (MKKTTVLQVCMVFVVCSLQAVIG) form the signal peptide. 3 disulfide bridges follow: C28/C38, C87/C202, and C219/C227. N226 carries N-linked (GlcNAc...) asparagine glycosylation.

This sequence belongs to the somatotropin/prolactin family.

It localises to the secreted. This Carassius auratus (Goldfish) protein is Somatolactin.